Reading from the N-terminus, the 4690-residue chain is Nonribosomal peptide synthetase sidN (4690 aa).

Residues 238–656 (ARVRENPGRI…LGRLSSDQIK (419 aa)) are adenylation 1. One can recognise a Carrier 1 domain in the interval 779 to 856 (SSSIPMLQSV…DLDTKAQQAL (78 aa)). At Ser816 the chain carries O-(pantetheine 4'-phosphoryl)serine. Residues 924–1175 (APGGKAFIQH…AFGNTMSDRF (252 aa)) are condensation 1. An adenylation 2 region spans residues 1349 to 1760 (EFAQKSPNAI…GRKDDLVKIR (412 aa)). The 77-residue stretch at 1889–1965 (PAWCIKHRPL…DLINHLSVKR (77 aa)) folds into the Carrier 2 domain. The residue at position 1926 (Ser1926) is an O-(pantetheine 4'-phosphoryl)serine. The segment at 2001 to 2285 (PTTVFQDGML…SERLLESQLV (285 aa)) is condensation 2. Residues 2464–2869 (TWAKTHPEWK…GRKDEQVKVR (406 aa)) are adenylation 3. The 78-residue stretch at 3002–3079 (RDLTSIEKQI…ELGRMKNALK (78 aa)) folds into the Carrier 3 domain. The residue at position 3040 (Ser3040) is an O-(pantetheine 4'-phosphoryl)serine. Positions 3121 to 3530 (CMPLQEVLVA…QMESLVTSFT (410 aa)) are condensation 3. The Carrier 4 domain occupies 3564–3637 (SVLEQQIRDV…KLATHIQTTS (74 aa)). Ser3598 is subject to O-(pantetheine 4'-phosphoryl)serine. The tract at residues 3679 to 4087 (VYPLTPLQAG…FESIRKHPDE (409 aa)) is condensation 4. The 77-residue stretch at 4119 to 4195 (SAIDQFLDPL…KLCEVAFAKS (77 aa)) folds into the Carrier 5 domain. At Ser4156 the chain carries O-(pantetheine 4'-phosphoryl)serine. Positions 4262 to 4589 (WVFKAENGLD…FNAHLNILWN (328 aa)) are condensation 5.

It belongs to the NRP synthetase family.

It participates in siderophore biosynthesis. Nonribosomal peptide synthetase required for the biosynthetis of epichloenin A, an extracellular siderophore that plays a crucial role in endophyte-grass symbioses. SidN assembles epichloenin A by activating and incorporating three trans-anhydromevalonylhydroxyornithine (trans-AMHO), 1 glutamine and 4 glycine moieties. Trans-AMHO is produced from L-ornithine via 2 steps involving a L-ornithine N(5)-monooxygenase and an AHMO-N(5)-transacylase that have still to be identified. The third adenylation domain (A3) of sidN incorporates the hydroxamate groups of the siderophore which forms an octahedral iron complex. The other component amino acids are assembled by sidN adenylation domains A1 and A2. The protein is Nonribosomal peptide synthetase sidN of Epichloe festucae (strain Fl1).